Here is a 136-residue protein sequence, read N- to C-terminus: MRHRIKGRRLNVTSSHRQSMLANMAVSLVIHEQIKTTLPKAKELRPYIEALITKAKKPDLAVRRSVLSKIKDKRAVEKIINILGVRYKDRPGGYTRIVKSGFRYGDLAPIAYIEFVDRDINAKGNVHQDANEEIKN.

Belongs to the bacterial ribosomal protein bL17 family. Part of the 50S ribosomal subunit. Contacts protein L32.

This chain is Large ribosomal subunit protein bL17, found in Rickettsia prowazekii (strain Madrid E).